Here is a 119-residue protein sequence, read N- to C-terminus: Ribonuclease P protein component (119 aa).

The protein belongs to the RnpA family. In terms of assembly, consists of a catalytic RNA component (M1 or rnpB) and a protein subunit.

The enzyme catalyses Endonucleolytic cleavage of RNA, removing 5'-extranucleotides from tRNA precursor.. Its function is as follows. RNaseP catalyzes the removal of the 5'-leader sequence from pre-tRNA to produce the mature 5'-terminus. It can also cleave other RNA substrates such as 4.5S RNA. The protein component plays an auxiliary but essential role in vivo by binding to the 5'-leader sequence and broadening the substrate specificity of the ribozyme. This Nitrosococcus oceani (strain ATCC 19707 / BCRC 17464 / JCM 30415 / NCIMB 11848 / C-107) protein is Ribonuclease P protein component.